Reading from the N-terminus, the 295-residue chain is Small ribosomal subunit protein uS2 (295 aa).

Belongs to the universal ribosomal protein uS2 family. Component of the small ribosomal subunit. Mature ribosomes consist of a small (40S) and a large (60S) subunit. The 40S subunit contains about 33 different proteins and 1 molecule of RNA (18S). The 60S subunit contains about 49 different proteins and 3 molecules of RNA (25S, 5.8S and 5S). Interacts with RPS21.

The protein resides in the cytoplasm. Required for the assembly and/or stability of the 40S ribosomal subunit. Required for the processing of the 20S rRNA-precursor to mature 18S rRNA in a late step of the maturation of 40S ribosomal subunits. This chain is Small ribosomal subunit protein uS2, found in Paracoccidioides brasiliensis (strain Pb18).